Consider the following 389-residue polypeptide: Teichoic acid ribitol-phosphate primase (389 aa).

It belongs to the CDP-glycerol glycerophosphotransferase family.

It is found in the cell membrane. It catalyses the reaction 4-O-[(2R)-glycerylphospho]-N-acetyl-beta-D-mannosaminyl-(1-&gt;4)-N-acetyl-alpha-D-glucosaminyl di-trans,octa-cis-undecaprenyl diphosphate + CDP-L-ribitol = 4-O-[1-D-ribitylphospho-(2R)-1-glycerylphospho]-N-acetyl-beta-D-mannosaminyl-(1-&gt;4)-N-acetyl-alpha-D-glucosaminyl di-trans,octa-cis-undecaprenyl diphosphate + CMP + H(+). The protein operates within cell wall biogenesis; poly(ribitol phosphate) teichoic acid biosynthesis. Its function is as follows. Catalyzes the addition of a single ribitol phosphate unit onto the glycerol phosphate of the linkage unit, as a primer for polymerisation by TarL. The sequence is that of Teichoic acid ribitol-phosphate primase (tarK) from Bacillus spizizenii (strain ATCC 23059 / NRRL B-14472 / W23) (Bacillus subtilis subsp. spizizenii).